Reading from the N-terminus, the 493-residue chain is Protein LTV1 homolog (493 aa).

Disordered stretches follow at residues 42–63 (AAARQQKPKDPEPPTDPAQRQE), 97–119 (PNQARKQKVQDSEKPGPAPKLML), and 170–207 (IQAMAEGDSDDEEWDDEDGEEQSDMDFDSDDLNEDENE). A compositionally biased stretch (acidic residues) spans 176-207 (GDSDDEEWDDEDGEEQSDMDFDSDDLNEDENE). A phosphoserine mark is found at S345, S369, S370, S424, and S427. The tract at residues 359 to 387 (VIDEPRRSRRSSASTNPAPIQIDPKTGLP) is disordered. The stretch at 437–468 (KDETHEEKKERKRLLKDYRNERRIEKKANTEA) forms a coiled coil. The span at 465-474 (NTEAFKEEKK) shows a compositional bias: basic and acidic residues. A disordered region spans residues 465 to 493 (NTEAFKEEKKRQTHVKINQRTNQQGASIV). Polar residues predominate over residues 479–493 (VKINQRTNQQGASIV).

The protein belongs to the LTV1 family. In terms of assembly, interacts with RpS3; the interaction is RNA-independent. Associates with free 40S ribosome subunits.

The protein resides in the cytoplasm. Its function is as follows. Necessary for the biogenesis of 40S ribosome subunits by regulating pre-rRNA processing. Non-ribosomal factor required for efficient nuclear export of the ribosomal 40S subunit. Necessary for endoreplication driven by Myc. The protein is Protein LTV1 homolog of Drosophila melanogaster (Fruit fly).